Reading from the N-terminus, the 123-residue chain is Mediator of RNA polymerase II transcription subunit 9 (123 aa).

A coiled-coil region spans residues 95-123; the sequence is WQLHIQEKKIELEKKTKHLQRLRESIQKQ.

This sequence belongs to the Mediator complex subunit 9 family. Component of the Mediator complex.

The protein localises to the nucleus. Functionally, component of the Mediator complex, a coactivator involved in the regulated transcription of nearly all RNA polymerase II-dependent genes. Mediator functions as a bridge to convey information from gene-specific regulatory proteins to the basal RNA polymerase II transcription machinery. Mediator is recruited to promoters by direct interactions with regulatory proteins and serves as a scaffold for the assembly of a functional preinitiation complex with RNA polymerase II and the general transcription factors. This chain is Mediator of RNA polymerase II transcription subunit 9 (CSE2), found in Kluyveromyces lactis (strain ATCC 8585 / CBS 2359 / DSM 70799 / NBRC 1267 / NRRL Y-1140 / WM37) (Yeast).